Here is a 1126-residue protein sequence, read N- to C-terminus: [F-actin]-monooxygenase mical2 (1126 aa).

The monooxygenase domain stretch occupies residues 2–494 (GENGDDKHGR…KHLFITNELQ (493 aa)). Residues Cys97, 116 to 118 (EKR), 123 to 125 (RNN), Phe183, Tyr299, and Asp399 each bind FAD. The 104-residue stretch at 516-619 (DVRPNKLLIW…MVLYLSKFYE (104 aa)) folds into the Calponin-homology (CH) domain. The Nuclear localization signal motif lies at 659–680 (RKRVPKDEKTSDDSDLNKRRKT). Disordered stretches follow at residues 748–830 (AVTA…SLSS) and 892–935 (PSLG…SGMS). A compositionally biased stretch (pro residues) spans 792-803 (VRPPVQPRPGPA). Basic and acidic residues predominate over residues 805–824 (PTRELRVVERAQSHPDDLGR). Low complexity predominate over residues 918–932 (SSSDSSPSSAPSRKS). Residues 1001 to 1063 (DTCYFCKRRV…QPHFMHSVTK (63 aa)) form the LIM zinc-binding domain. Cys1003, Cys1006, His1024, Cys1027, Cys1030, Cys1033, Cys1053, and His1056 together coordinate Zn(2+).

Belongs to the Mical family. FAD serves as cofactor.

The protein resides in the nucleus. It localises to the cytoplasm. The catalysed reaction is L-methionyl-[F-actin] + NADPH + O2 + H(+) = L-methionyl-(R)-S-oxide-[F-actin] + NADP(+) + H2O. Nuclear monooxygenase that promotes depolymerization of F-actin by mediating oxidation of specific methionine residues on actin and regulates the srf signaling. Acts by modifying nuclear actin subunits through the addition of oxygen to form methionine-sulfoxide, leading to promote actin filament severing and prevent repolymerization. Acts as a key regulator of the srf signaling pathway elicited by nerve growth factor and serum: mediates oxidation and subsequent depolymerization of nuclear actin, leading to increase mkl1/mrtf-a presence in the nucleus and promote srf:mkl1/mrtf-a-dependent gene transcription. This Xenopus tropicalis (Western clawed frog) protein is [F-actin]-monooxygenase mical2.